A 133-amino-acid chain; its full sequence is MVMLDTLANAMAAIVNAEMRAKPEVIIMPASKLIANVLRVMQREGYIGEFEYIDDGRWGKIRVRLLGRINKAGVIKPRFSVKYKDLIRMPDWLRKYLPSRDIGILIISTSQGVMSHREAIQRRIGGVLLAYVY.

This sequence belongs to the universal ribosomal protein uS8 family. Part of the 30S ribosomal subunit.

Functionally, one of the primary rRNA binding proteins, it binds directly to 16S rRNA central domain where it helps coordinate assembly of the platform of the 30S subunit. The sequence is that of Small ribosomal subunit protein uS8 from Hyperthermus butylicus (strain DSM 5456 / JCM 9403 / PLM1-5).